The primary structure comprises 155 residues: Interleukin-2 (155 aa).

The first 20 residues, Met-1–Gly-20, serve as a signal peptide directing secretion. Thr-23 is a glycosylation site (O-linked (GalNAc...) threonine). Cys-79 and Cys-127 are joined by a disulfide.

This sequence belongs to the IL-2 family.

Its subcellular location is the secreted. Its function is as follows. Cytokine produced by activated CD4-positive helper T-cells and to a lesser extend activated CD8-positive T-cells and natural killer (NK) cells that plays pivotal roles in the immune response and tolerance. Binds to a receptor complex composed of either the high-affinity trimeric IL-2R (IL2RA/CD25, IL2RB/CD122 and IL2RG/CD132) or the low-affinity dimeric IL-2R (IL2RB and IL2RG). Interaction with the receptor leads to oligomerization and conformation changes in the IL-2R subunits resulting in downstream signaling starting with phosphorylation of JAK1 and JAK3. In turn, JAK1 and JAK3 phosphorylate the receptor to form a docking site leading to the phosphorylation of several substrates including STAT5. This process leads to activation of several pathways including STAT, phosphoinositide-3-kinase/PI3K and mitogen-activated protein kinase/MAPK pathways. Functions as a T-cell growth factor and can increase NK-cell cytolytic activity as well. Promotes strong proliferation of activated B-cells and subsequently immunoglobulin production. Plays a pivotal role in regulating the adaptive immune system by controlling the survival and proliferation of regulatory T-cells, which are required for the maintenance of immune tolerance. Moreover, participates in the differentiation and homeostasis of effector T-cell subsets, including Th1, Th2, Th17 as well as memory CD8-positive T-cells. This Moschus berezovskii (Chinese forest musk deer) protein is Interleukin-2 (IL2).